A 95-amino-acid chain; its full sequence is Acyl carrier protein AcpXL (95 aa).

In terms of domain architecture, Carrier spans 4 to 90 (TATFDKVADI…NLCAKIDELR (87 aa)). At Ser39 the chain carries O-(pantetheine 4'-phosphoryl)serine.

4'-phosphopantetheine is transferred from CoA to a specific serine of apo-ACP by AcpS. This modification is essential for activity because fatty acids are bound in thioester linkage to the sulfhydryl of the prosthetic group.

It is found in the cytoplasm. It participates in glycolipid biosynthesis; KDO(2)-lipid A biosynthesis. Carrier of the growing fatty acid chain in fatty acid biosynthesis. Is involved in the transfer of long hydroxylated fatty acids to lipid A. In Rhizobium meliloti (strain 1021) (Ensifer meliloti), this protein is Acyl carrier protein AcpXL (acpXL).